Consider the following 210-residue polypeptide: Uridine kinase (210 aa).

Gly-12–Thr-19 lines the ATP pocket.

It belongs to the uridine kinase family.

The protein resides in the cytoplasm. The catalysed reaction is uridine + ATP = UMP + ADP + H(+). It catalyses the reaction cytidine + ATP = CMP + ADP + H(+). Its pathway is pyrimidine metabolism; CTP biosynthesis via salvage pathway; CTP from cytidine: step 1/3. It participates in pyrimidine metabolism; UMP biosynthesis via salvage pathway; UMP from uridine: step 1/1. This is Uridine kinase from Bacillus pumilus (strain SAFR-032).